The following is a 675-amino-acid chain: UvrABC system protein B (675 aa).

The 388-residue stretch at 35 to 422 (EGVSDGLMFQ…ADNVVEQVVR (388 aa)) folds into the Helicase ATP-binding domain. Position 48–55 (48–55 (GVTGSGKT)) interacts with ATP. The Beta-hairpin motif lies at 101 to 124 (YYDYYQPEAYVPTRDLFIEKDSSI). Positions 439 to 605 (QVDDLLGEIH…GVSKAVRELI (167 aa)) constitute a Helicase C-terminal domain. The UVR domain maps to 633 to 668 (AREIRRLEKLMMDHARNLEFEQAAAARDALNALKSR).

It belongs to the UvrB family. Forms a heterotetramer with UvrA during the search for lesions. Interacts with UvrC in an incision complex.

It localises to the cytoplasm. Functionally, the UvrABC repair system catalyzes the recognition and processing of DNA lesions. A damage recognition complex composed of 2 UvrA and 2 UvrB subunits scans DNA for abnormalities. Upon binding of the UvrA(2)B(2) complex to a putative damaged site, the DNA wraps around one UvrB monomer. DNA wrap is dependent on ATP binding by UvrB and probably causes local melting of the DNA helix, facilitating insertion of UvrB beta-hairpin between the DNA strands. Then UvrB probes one DNA strand for the presence of a lesion. If a lesion is found the UvrA subunits dissociate and the UvrB-DNA preincision complex is formed. This complex is subsequently bound by UvrC and the second UvrB is released. If no lesion is found, the DNA wraps around the other UvrB subunit that will check the other stand for damage. This chain is UvrABC system protein B, found in Bordetella bronchiseptica (strain ATCC BAA-588 / NCTC 13252 / RB50) (Alcaligenes bronchisepticus).